Consider the following 471-residue polypeptide: Elongation factor 1-alpha (471 aa).

The 230-residue stretch at 10 to 239 (KPRLNACFIG…EALNYQDVPE (230 aa)) folds into the tr-type G domain. The tract at residues 19-26 (GHVDSGKS) is G1. 19 to 26 (GHVDSGKS) contacts GTP. The segment at 75 to 79 (GITIT) is G2. A G3 region spans residues 96-99 (DCPG). Residues 96-100 (DCPGH) and 156-159 (NKMD) each bind GTP. Residues 156–159 (NKMD) are G4. Residues 196–198 (SAF) are G5.

This sequence belongs to the TRAFAC class translation factor GTPase superfamily. Classic translation factor GTPase family. EF-Tu/EF-1A subfamily. As to quaternary structure, component of the eukaryotic elongation factor 1 complex (eEF1).

The protein localises to the cytoplasm. It participates in protein biosynthesis; polypeptide chain elongation. In terms of biological role, GTP-binding component of the eukaryotic elongation factor 1 complex (eEF1). In its active GTP-bound form, binds to and delivers aminoacyl-tRNA to the A-site of ribosomes during protein biosynthesis. In the presence of a correct codon-anticodon match between the aminoacyl-tRNA and the A-site codon of the ribosome-bound mRNA, the ribosome acts as a GTPase activator and the GTP is hydrolyzed. The inactive GDP-bound form leaves the ribosome and must be recycled by its guanine nucleotide exchange factor (GEF) (eEF1B subcomplex) before binding another molecule of aminoacyl-tRNA. Required for nuclear export of aminoacyl-tRNAs. May also be involved in translational quality control by targeting cotranslationally damaged proteins to the proteasome. The sequence is that of Elongation factor 1-alpha (TEF1) from Encephalitozoon cuniculi (strain GB-M1) (Microsporidian parasite).